Here is a 105-residue protein sequence, read N- to C-terminus: Large ribosomal subunit protein P2 (105 aa).

Positions 84 to 105 (AEAKKEEPEEEADDDMGFGLFD) are disordered.

Belongs to the eukaryotic ribosomal protein P1/P2 family. P1 and P2 exist as dimers at the large ribosomal subunit. In terms of processing, phosphorylated.

Its function is as follows. Plays an important role in the elongation step of protein synthesis. The polypeptide is Large ribosomal subunit protein P2 (ARP-1) (Leishmania donovani).